The following is a 357-amino-acid chain: DNA replication and repair protein RecF (357 aa).

30–37 (GANGSGKT) contributes to the ATP binding site.

This sequence belongs to the RecF family.

It is found in the cytoplasm. In terms of biological role, the RecF protein is involved in DNA metabolism; it is required for DNA replication and normal SOS inducibility. RecF binds preferentially to single-stranded, linear DNA. It also seems to bind ATP. The protein is DNA replication and repair protein RecF of Salmonella schwarzengrund (strain CVM19633).